The sequence spans 205 residues: Recombination protein RecR (205 aa).

A C4-type zinc finger spans residues 59-74; that stretch reads CARCNTFCEGGLCDIC. In terms of domain architecture, Toprim spans 82-177; sequence RRLMVVHMPA…KVSRLSQGIP (96 aa).

The protein belongs to the RecR family.

Its function is as follows. May play a role in DNA repair. It seems to be involved in an RecBC-independent recombinational process of DNA repair. It may act with RecF and RecO. The sequence is that of Recombination protein RecR from Neisseria meningitidis serogroup A / serotype 4A (strain DSM 15465 / Z2491).